The primary structure comprises 272 residues: Shikimate dehydrogenase (NADP(+)) (272 aa).

Shikimate is bound by residues 16 to 18 (SLS) and Thr63. Catalysis depends on Lys67, which acts as the Proton acceptor. An NADP(+)-binding site is contributed by Glu79. The shikimate site is built by Asn88 and Asp103. Residues 127-131 (GAGGA), 151-156 (NRTMSR), and Ile212 each bind NADP(+). Tyr214 serves as a coordination point for shikimate. Gly235 serves as a coordination point for NADP(+).

It belongs to the shikimate dehydrogenase family. As to quaternary structure, homodimer.

The enzyme catalyses shikimate + NADP(+) = 3-dehydroshikimate + NADPH + H(+). The protein operates within metabolic intermediate biosynthesis; chorismate biosynthesis; chorismate from D-erythrose 4-phosphate and phosphoenolpyruvate: step 4/7. Functionally, involved in the biosynthesis of the chorismate, which leads to the biosynthesis of aromatic amino acids. Catalyzes the reversible NADPH linked reduction of 3-dehydroshikimate (DHSA) to yield shikimate (SA). This chain is Shikimate dehydrogenase (NADP(+)), found in Staphylococcus epidermidis (strain ATCC 12228 / FDA PCI 1200).